The primary structure comprises 831 residues: V-type proton ATPase 116 kDa subunit a1 (831 aa).

At 1-388 (MGELFRSEEM…DAYGIGSYRE (388 aa)) the chain is on the cytoplasmic side. A helical transmembrane segment spans residues 389 to 407 (INPAPYTIITFPFLFAVMF). At 408–409 (GD) the chain is on the vacuolar side. A helical transmembrane segment spans residues 410–426 (FGHGILMTLFAVWMVVR). The Cytoplasmic portion of the chain corresponds to 427–441 (ESRILSQKIDNELFS). A helical transmembrane segment spans residues 442-471 (MMFSGRYIILLMGLFSTYTGLIYNDCFSKA). The Vacuolar segment spans residues 472–534 (LNLFGSSWSV…ATNKLTFLNS (63 aa)). Residues 535–554 (FKMKMSVILGIIHMIFGVAL) form a helical membrane-spanning segment. At 555 to 572 (SVLNHIYFKKPLNIYLSF) the chain is on the cytoplasmic side. The helical transmembrane segment at 573–593 (IPEMIFMTTLFGYLVILIIYK) threads the bilayer. The Vacuolar segment spans residues 594-638 (WCAYDVSTSMVAPSLLIHFINMFLFSYQDTSLPMLYKGQMGLQCF). A helical transmembrane segment spans residues 639–658 (LVVCAIICVPWMLVLKPLIL). The Cytoplasmic portion of the chain corresponds to 659–718 (RRQYLRRKHLGTHNFGGIRVGNGPTEEDAEIIQHDQLSMHSDEEEEFDFGDTVVHQAIHT). A helical membrane pass occupies residues 719–743 (IEYCLGCISNTASYLRLWALSLAHA). Residues 744 to 764 (QLSEVLWTMVMHIGLNIRSLG) are Vacuolar-facing. Residues 765-803 (GGIALVFIFSAFATLTIAILLIMEGLSAFLHALRLHWVE) form a helical membrane-spanning segment. Residues 804–831 (FRNKFYMGTGFKFLPFSFETIWEGKFDD) lie on the Cytoplasmic side of the membrane.

This sequence belongs to the V-ATPase 116 kDa subunit family. V-ATPase is a heteromultimeric enzyme made up of two complexes: the ATP-hydrolytic V1 complex and the proton translocation V0 complex. The V1 complex consists of three catalytic AB heterodimers that form a heterohexamer, three peripheral stalks each consisting of EG heterodimers, one central rotor including subunits D and F, and the regulatory subunits C and H. The proton translocation complex V0 consists of the proton transport subunit a, a ring of proteolipid subunits c9c'', rotary subunit d, subunits e and f, and two accessory subunits.

The protein localises to the cytoplasmic vesicle. It is found in the clathrin-coated vesicle membrane. The protein resides in the secretory vesicle. Its subcellular location is the synaptic vesicle membrane. It localises to the melanosome. Functionally, subunit of the V0 complex of vacuolar(H+)-ATPase (V-ATPase), a multisubunit enzyme composed of a peripheral complex (V1) that hydrolyzes ATP and a membrane integral complex (V0) that translocates protons. V-ATPase is responsible for acidifying and maintaining the pH of intracellular compartments and in some cell types, is targeted to the plasma membrane, where it is responsible for acidifying the extracellular environment. Required for assembly and activity of the vacuolar ATPase. This is V-type proton ATPase 116 kDa subunit a1 (atp6v0a1) from Xenopus laevis (African clawed frog).